The primary structure comprises 269 residues: MNKRFQGKVAVITGAAQGIGRRVAERMAAEGGRLLLVDRSELIHELADELVGVAEVLTLTADLEQFAECQRVMAAALERFGRLDILINNVGGTIWAKPFEHYQEREIEAEVRRSLFPTLWCCHAALAPMIEQGSGAIVNVSSVATRGIHRVPYGAAKGGVNALTACLAFETAERGIRVNATAPGGTEARHGGFRNSAEPSEQEKVWYQQIVDQSLDSSLMKRYGSIDEQVEAILFLASDAASYITGITLPVAGGDLGCQSCSVMFSVSG.

Position 11-35 (11-35 (VITGAAQGIGRRVAERMAAEGGRLL)) interacts with NAD(+). Ser-142 is a binding site for substrate. The Proton acceptor role is filled by Tyr-153.

It belongs to the short-chain dehydrogenases/reductases (SDR) family. As to quaternary structure, homodimer.

It catalyses the reaction (1R,6S)-1,6-dihydroxycyclohexa-2,4-diene-1-carboxylate + NAD(+) = catechol + CO2 + NADH. It participates in aromatic compound metabolism; benzoate degradation via hydroxylation; catechol from benzoate: step 2/2. Degradation of 2-hydro-1,2-dihydroxy benzoate (DHB) to catechol. The protein is 1,6-dihydroxycyclohexa-2,4-diene-1-carboxylate dehydrogenase (xylL) of Pseudomonas putida (Arthrobacter siderocapsulatus).